Here is a 348-residue protein sequence, read N- to C-terminus: D-alanine--D-alanine ligase (348 aa).

The ATP-grasp domain occupies 132–334 (KQVLATVGVP…YSDLIEKLVM (203 aa)). 162–217 (LETLSFPIFVKPANMGSSVGISKATDESSLRSAIDLALKYDSRILIEQGVTAREIE) lines the ATP pocket. 3 residues coordinate Mg(2+): Asp-288, Glu-301, and Asn-303.

Belongs to the D-alanine--D-alanine ligase family. It depends on Mg(2+) as a cofactor. Mn(2+) is required as a cofactor.

Its subcellular location is the cytoplasm. It catalyses the reaction 2 D-alanine + ATP = D-alanyl-D-alanine + ADP + phosphate + H(+). It functions in the pathway cell wall biogenesis; peptidoglycan biosynthesis. Functionally, cell wall formation. This is D-alanine--D-alanine ligase from Streptococcus agalactiae serotype Ia (strain ATCC 27591 / A909 / CDC SS700).